A 138-amino-acid chain; its full sequence is Ribosome-binding factor A (138 aa).

The protein belongs to the RbfA family. In terms of assembly, monomer. Binds 30S ribosomal subunits, but not 50S ribosomal subunits or 70S ribosomes.

It is found in the cytoplasm. Functionally, one of several proteins that assist in the late maturation steps of the functional core of the 30S ribosomal subunit. Associates with free 30S ribosomal subunits (but not with 30S subunits that are part of 70S ribosomes or polysomes). Required for efficient processing of 16S rRNA. May interact with the 5'-terminal helix region of 16S rRNA. In Chromobacterium violaceum (strain ATCC 12472 / DSM 30191 / JCM 1249 / CCUG 213 / NBRC 12614 / NCIMB 9131 / NCTC 9757 / MK), this protein is Ribosome-binding factor A.